We begin with the raw amino-acid sequence, 145 residues long: Small ribosomal subunit protein eS19 (145 aa).

Lys23 carries the N6-acetyllysine modification. At Arg67 the chain carries Omega-N-methylarginine. N6-acetyllysine occurs at positions 111 and 115. Residue Lys143 is modified to N6-succinyllysine.

Belongs to the eukaryotic ribosomal protein eS19 family. Component of the small ribosomal subunit. Part of the small subunit (SSU) processome, composed of more than 70 proteins and the RNA chaperone small nucleolar RNA (snoRNA) U3. Interacts with RPS19BP1; the interaction is direct and mediates the integration of RPS19 in state post-A1. Interacts with RPS19BP1.

It is found in the cytoplasm. The protein resides in the nucleus. It localises to the nucleolus. Functionally, component of the small ribosomal subunit. The ribosome is a large ribonucleoprotein complex responsible for the synthesis of proteins in the cell. Required for pre-rRNA processing and maturation of 40S ribosomal subunits. Part of the small subunit (SSU) processome, first precursor of the small eukaryotic ribosomal subunit. During the assembly of the SSU processome in the nucleolus, many ribosome biogenesis factors, an RNA chaperone and ribosomal proteins associate with the nascent pre-rRNA and work in concert to generate RNA folding, modifications, rearrangements and cleavage as well as targeted degradation of pre-ribosomal RNA by the RNA exosome. The chain is Small ribosomal subunit protein eS19 (RPS19) from Pongo abelii (Sumatran orangutan).